Reading from the N-terminus, the 445-residue chain is C-terminal-binding protein 2 (445 aa).

The residue at position 22 (R22) is an Asymmetric dimethylarginine. NAD(+) is bound by residues S106, 186–191 (IGFGRT), D210, 243–249 (CNLNEHN), 270–272 (AAR), and D296. R272 is an active-site residue. The active site involves E301. The Proton donor role is filled by H321. 321–324 (HTAW) contacts NAD(+). Positions 414-445 (THNLPTVAHPSQAPSPNQPTKHGDNREHPNEQ) are disordered. At S428 the chain carries Phosphoserine. Residues 434 to 445 (KHGDNREHPNEQ) show a composition bias toward basic and acidic residues.

This sequence belongs to the D-isomer specific 2-hydroxyacid dehydrogenase family. Interacts with the C-terminus of adenovirus E1A protein. Can form homodimers or heterodimers of CTBP1 and CTBP2. Interacts with HIPK2. Interacts with ZNF217, PNN, NRIP1 and WIZ. Interacts with PRDM16; represses white adipose tissue (WAT)-specific genes expression. Interacts with MCRIP1. In terms of tissue distribution, isoform 2 is specifically localized in synaptic ribbon (at protein level).

Its subcellular location is the nucleus. It localises to the synapse. Functionally, corepressor targeting diverse transcription regulators. Functions in brown adipose tissue (BAT) differentiation. Isoform 2 probably acts as a scaffold for specialized synapses. The chain is C-terminal-binding protein 2 (CTBP2) from Bos taurus (Bovine).